The primary structure comprises 302 residues: Recombination-associated protein RdgC (302 aa).

It belongs to the RdgC family.

The protein localises to the cytoplasm. It localises to the nucleoid. Functionally, may be involved in recombination. The protein is Recombination-associated protein RdgC of Tolumonas auensis (strain DSM 9187 / NBRC 110442 / TA 4).